The sequence spans 599 residues: UPF0313 protein UNCMA_01890 (599 aa).

The 277-residue stretch at 281 to 557 folds into the Radical SAM core domain; the sequence is EDIPALRTVR…RALLQYKNPE (277 aa). The [4Fe-4S] cluster site is built by Cys-299, Cys-303, and Cys-306.

It belongs to the UPF0313 family. Requires [4Fe-4S] cluster as cofactor.

The sequence is that of UPF0313 protein UNCMA_01890 from Methanocella arvoryzae (strain DSM 22066 / NBRC 105507 / MRE50).